Here is a 762-residue protein sequence, read N- to C-terminus: Primary amine oxidase, liver isozyme (762 aa).

An N-terminal signal peptide occupies residues 1 to 16 (MFIFIFLSLWTLLVMG). The segment at 23 to 54 (GSEEGVGKQCHPSLPPRCPSRSPSDQPWTHPD) is disordered. An N-linked (GlcNAc...) asparagine glycan is attached at Asn-136. An intrachain disulfide couples Cys-197 to Cys-198. Residue Asn-231 is glycosylated (N-linked (GlcNAc...) asparagine). Residue 383–393 (YMDSGFGMGYF) coordinates substrate. Residue Asp-385 is the Proton acceptor of the active site. Cys-403 and Cys-429 form a disulfide bridge. Residue 467–472 (MLNYDY) participates in substrate binding. Tyr-470 acts as the Schiff-base intermediate with substrate; via topaquinone in catalysis. 2',4',5'-topaquinone is present on Tyr-470. 2 residues coordinate Cu cation: His-519 and His-521. Ca(2+) contacts are provided by Asp-528, Leu-529, Asp-530, Glu-571, Phe-662, and Asn-664. Residue Asn-665 is glycosylated (N-linked (GlcNAc...) asparagine). Ca(2+) contacts are provided by Glu-666, Asp-672, and Leu-673. Cu cation is bound at residue His-683. Cys-733 and Cys-740 are joined by a disulfide.

Belongs to the copper/topaquinone oxidase family. As to quaternary structure, homodimer; disulfide-linked. Cu cation is required as a cofactor. It depends on Ca(2+) as a cofactor. L-topaquinone serves as cofactor. In terms of processing, topaquinone (TPQ) is generated by copper-dependent autoxidation of a specific tyrosyl residue. In terms of tissue distribution, liver.

It is found in the secreted. It localises to the extracellular space. The catalysed reaction is a primary methyl amine + O2 + H2O = an aldehyde + H2O2 + NH4(+). In Bos taurus (Bovine), this protein is Primary amine oxidase, liver isozyme.